Here is a 235-residue protein sequence, read N- to C-terminus: Sugar fermentation stimulation protein homolog (235 aa).

Belongs to the SfsA family.

This Bartonella henselae (strain ATCC 49882 / DSM 28221 / CCUG 30454 / Houston 1) (Rochalimaea henselae) protein is Sugar fermentation stimulation protein homolog.